Here is a 513-residue protein sequence, read N- to C-terminus: Histidine ammonia-lyase (513 aa).

Residues 144 to 146 constitute a cross-link (5-imidazolinone (Ala-Gly)); that stretch reads ASG. Ser-145 is subject to 2,3-didehydroalanine (Ser).

This sequence belongs to the PAL/histidase family. Contains an active site 4-methylidene-imidazol-5-one (MIO), which is formed autocatalytically by cyclization and dehydration of residues Ala-Ser-Gly.

Its subcellular location is the cytoplasm. It catalyses the reaction L-histidine = trans-urocanate + NH4(+). It participates in amino-acid degradation; L-histidine degradation into L-glutamate; N-formimidoyl-L-glutamate from L-histidine: step 1/3. In Streptococcus pyogenes serotype M1, this protein is Histidine ammonia-lyase.